Consider the following 211-residue polypeptide: Ethylene-responsive transcription factor LEP (211 aa).

Disordered regions lie at residues 1–21 (MNTTSSKSKKKQDDQVGTRFL) and 74–110 (NFVYSDMPPSSSVTSIVSPDDPPPPPPPPAPPSNDPV). Positions 19-76 (RFLGVRRRPWGRYAAEIRDPTTKERHWLGTFDTAEEAALAYDRAARSMRGTRARTNFV) form a DNA-binding region, AP2/ERF. Low complexity predominate over residues 81 to 92 (PPSSSVTSIVSP). Positions 93–107 (DDPPPPPPPPAPPSN) are enriched in pro residues.

This sequence belongs to the AP2/ERF transcription factor family. ERF subfamily. As to expression, expressed in germinating seeds. Present in young shoots, at low levels, especially in leaf primordia and developing leaf blades. Also detected in vascular tissue, mostly in xylem, of young leaves, petioles and hypocotyls.

The protein resides in the nucleus. Cell division-promoting factor involved in leaf blade differentiation, inflorescence branching, as well as in carpel and silique shape. Promotes the number of xylem cells. Positively regulates the gibberellin signaling pathway leading to germination, hypocotyl elongation, and leaf expansion. Probably acts as a transcriptional activator. Binds to the GCC-box pathogenesis-related promoter element. May be involved in the regulation of gene expression by stress factors and by components of stress signal transduction pathways. The sequence is that of Ethylene-responsive transcription factor LEP (LEP) from Arabidopsis thaliana (Mouse-ear cress).